Consider the following 269-residue polypeptide: 3-methyl-2-oxobutanoate hydroxymethyltransferase (269 aa).

Mg(2+) is bound by residues Asp-50 and Asp-89. 3-methyl-2-oxobutanoate contacts are provided by residues 50–51, Asp-89, and Lys-118; that span reads DS. Glu-120 serves as a coordination point for Mg(2+). The Proton acceptor role is filled by Glu-187.

The protein belongs to the PanB family. Homodecamer; pentamer of dimers. Mg(2+) is required as a cofactor.

It localises to the cytoplasm. It catalyses the reaction 3-methyl-2-oxobutanoate + (6R)-5,10-methylene-5,6,7,8-tetrahydrofolate + H2O = 2-dehydropantoate + (6S)-5,6,7,8-tetrahydrofolate. It participates in cofactor biosynthesis; (R)-pantothenate biosynthesis; (R)-pantoate from 3-methyl-2-oxobutanoate: step 1/2. Its function is as follows. Catalyzes the reversible reaction in which hydroxymethyl group from 5,10-methylenetetrahydrofolate is transferred onto alpha-ketoisovalerate to form ketopantoate. This is 3-methyl-2-oxobutanoate hydroxymethyltransferase from Nitrosomonas eutropha (strain DSM 101675 / C91 / Nm57).